The chain runs to 812 residues: MDQTEKLRIRQEKLAKWKKQKLNNDVTASVSVDAKEERLKKLEAWKKKKKQQDELKQKDIKLTSIKSADRDRNKRRGQCSRKRPAFGGSDSESDDENSTSTLFKPRRNDTNTHVLTKDNSKDDLDDGNDALDEYIHKLIDKDSNTNRVRLIDNISEDEDANDSSSEKTISQEEAPVDSEILFKKKGRKKIKAIDYSKVLNLITLNKCLYREPNDLGLMSEKDVEELRLSLDNIKISGKDCPKPVTKWSQLGLSSEIMDLISNELQFVTLTPIQCQAIPAIMSGRDVIGISKTGSGKTVAFLLPLVRQIKAQPPLAPDETGPIGLILTPTRELAVQIQEEALKFCKGSGISSICCVGGSELKQQINELKRGVDIIVATPGRFIDLMTLNSGHLLSPTRISFVVMDEADRLFDLGFGPQVNQIMGCIRPDKQCVLFSATFPSKLKHFASRTLKNPIQITINSKSLINENIQQRVQIFDEEHVKFEFLLKRLSDRLALHRGEDEKTIIFVGSQQLCDLLYDELLLNGITTFPIHAGKPSAERLRNLQKFKETDNGILICTEVLSRGLNVPEVSLVIIYNAAKTIAQYVHTVGRTGRGTNNGVALSFVMVDELASAYILVKCMKENELSSVPMVVYQKLKEMNDEFSSGLKTGKYRLIQGFGGKGLDHLDELNEAKQSQEYTDYGVVENEEDVTEEESGATKMEYTRGKREEGHSTTYFAHININDLPQLARWEATKTETVSNIKQETGCNFESKGSFYPEGKGPKNDTDDPKLYLIVEGAEESDVTMALELLNTKVKEGIRKAAVKDIQSGKYRM.

Basic and acidic residues predominate over residues 45 to 72; it reads WKKKKKQQDELKQKDIKLTSIKSADRDR. 2 disordered regions span residues 45 to 126 and 153 to 173; these read WKKK…DLDD and NISE…SQEE. Basic residues predominate over residues 73-84; the sequence is NKRRGQCSRKRP. A compositionally biased stretch (basic and acidic residues) spans 106–122; sequence RRNDTNTHVLTKDNSKD. The Q motif signature appears at 245–274; the sequence is TKWSQLGLSSEIMDLISNELQFVTLTPIQC. The Helicase ATP-binding domain occupies 277 to 456; the sequence is IPAIMSGRDV…SRTLKNPIQI (180 aa). 290-297 contributes to the ATP binding site; that stretch reads SKTGSGKT. The DEAD box signature appears at 404 to 407; it reads DEAD. Positions 481-639 constitute a Helicase C-terminal domain; it reads KFEFLLKRLS…VVYQKLKEMN (159 aa). A disordered region spans residues 686-705; the sequence is EEDVTEEESGATKMEYTRGK.

This sequence belongs to the DEAD box helicase family. DDX46/PRP5 subfamily.

It is found in the nucleus. The enzyme catalyses ATP + H2O = ADP + phosphate + H(+). ATP-dependent RNA helicase involved spliceosome assembly and in nuclear splicing. Catalyzes an ATP-dependent conformational change of U2 snRNP. Bridges U1 and U2 snRNPs and enables stable U2 snRNP association with intron RNA. The polypeptide is Pre-mRNA-processing ATP-dependent RNA helicase PRP5 (PRP5) (Kluyveromyces lactis (strain ATCC 8585 / CBS 2359 / DSM 70799 / NBRC 1267 / NRRL Y-1140 / WM37) (Yeast)).